Here is a 181-residue protein sequence, read N- to C-terminus: ATP synthase subunit delta (181 aa).

The protein belongs to the ATPase delta chain family. As to quaternary structure, F-type ATPases have 2 components, F(1) - the catalytic core - and F(0) - the membrane proton channel. F(1) has five subunits: alpha(3), beta(3), gamma(1), delta(1), epsilon(1). F(0) has three main subunits: a(1), b(2) and c(10-14). The alpha and beta chains form an alternating ring which encloses part of the gamma chain. F(1) is attached to F(0) by a central stalk formed by the gamma and epsilon chains, while a peripheral stalk is formed by the delta and b chains.

Its subcellular location is the cell inner membrane. F(1)F(0) ATP synthase produces ATP from ADP in the presence of a proton or sodium gradient. F-type ATPases consist of two structural domains, F(1) containing the extramembraneous catalytic core and F(0) containing the membrane proton channel, linked together by a central stalk and a peripheral stalk. During catalysis, ATP synthesis in the catalytic domain of F(1) is coupled via a rotary mechanism of the central stalk subunits to proton translocation. In terms of biological role, this protein is part of the stalk that links CF(0) to CF(1). It either transmits conformational changes from CF(0) to CF(1) or is implicated in proton conduction. This chain is ATP synthase subunit delta, found in Chlorobaculum tepidum (strain ATCC 49652 / DSM 12025 / NBRC 103806 / TLS) (Chlorobium tepidum).